We begin with the raw amino-acid sequence, 298 residues long: Ribosomal protein L11 methyltransferase (298 aa).

S-adenosyl-L-methionine contacts are provided by T152, G173, D195, and N234.

It belongs to the methyltransferase superfamily. PrmA family.

The protein resides in the cytoplasm. The enzyme catalyses L-lysyl-[protein] + 3 S-adenosyl-L-methionine = N(6),N(6),N(6)-trimethyl-L-lysyl-[protein] + 3 S-adenosyl-L-homocysteine + 3 H(+). Methylates ribosomal protein L11. This Ralstonia pickettii (strain 12J) protein is Ribosomal protein L11 methyltransferase.